The following is a 455-amino-acid chain: Zinc finger and BTB domain-containing protein 8A.2 (455 aa).

In terms of domain architecture, BTB spans 24-92; the sequence is CDCHIMIDGH…MYSGKLNLSG (69 aa). C2H2-type zinc fingers lie at residues 299 to 321 and 327 to 350; these read FKCP…LLCH and YPCQ…RTIH.

Its subcellular location is the nucleus. Its function is as follows. May be involved in transcriptional regulation. In Xenopus tropicalis (Western clawed frog), this protein is Zinc finger and BTB domain-containing protein 8A.2 (zbtb8a.2).